The primary structure comprises 408 residues: UPF0761 membrane protein azo3165 (408 aa).

Helical transmembrane passes span L29–G49, L92–E112, I131–A151, I172–A192, P197–M217, G220–A240, and L241–I261.

Belongs to the UPF0761 family.

The protein resides in the cell inner membrane. The chain is UPF0761 membrane protein azo3165 from Azoarcus sp. (strain BH72).